A 308-amino-acid polypeptide reads, in one-letter code: Isoflavone reductase-like protein (308 aa).

Residues 11–17, R36, and K45 contribute to the NADP(+) site; that span reads GGTGYIG. K133 acts as the Proton acceptor in catalysis. R137 is a binding site for NADP(+).

Belongs to the NmrA-type oxidoreductase family. Isoflavone reductase subfamily. As to quaternary structure, homodimer.

The protein localises to the cytoplasm. The sequence is that of Isoflavone reductase-like protein from Olea europaea (Common olive).